A 158-amino-acid chain; its full sequence is NAD(P)H-quinone oxidoreductase subunit J, chloroplastic (158 aa).

It belongs to the complex I 30 kDa subunit family. NDH is composed of at least 16 different subunits, 5 of which are encoded in the nucleus.

Its subcellular location is the plastid. The protein localises to the chloroplast thylakoid membrane. It carries out the reaction a plastoquinone + NADH + (n+1) H(+)(in) = a plastoquinol + NAD(+) + n H(+)(out). The enzyme catalyses a plastoquinone + NADPH + (n+1) H(+)(in) = a plastoquinol + NADP(+) + n H(+)(out). In terms of biological role, NDH shuttles electrons from NAD(P)H:plastoquinone, via FMN and iron-sulfur (Fe-S) centers, to quinones in the photosynthetic chain and possibly in a chloroplast respiratory chain. The immediate electron acceptor for the enzyme in this species is believed to be plastoquinone. Couples the redox reaction to proton translocation, and thus conserves the redox energy in a proton gradient. The sequence is that of NAD(P)H-quinone oxidoreductase subunit J, chloroplastic from Solanum bulbocastanum (Wild potato).